Reading from the N-terminus, the 150-residue chain is Large ribosomal subunit protein bL9 (150 aa).

The protein belongs to the bacterial ribosomal protein bL9 family.

Its function is as follows. Binds to the 23S rRNA. This is Large ribosomal subunit protein bL9 from Corynebacterium jeikeium (strain K411).